We begin with the raw amino-acid sequence, 225 residues long: DNA-binding response regulator MtrA (225 aa).

The region spanning 4–117 (RILVVDDDAS…ELVARVRARL (114 aa)) is the Response regulatory domain. Position 53 is a 4-aspartylphosphate (aspartate 53). Positions 125-224 (AEMLSIADVD…VRGVGYKAGP (100 aa)) form a DNA-binding region, ompR/PhoB-type.

Phosphorylated by MtrB.

Functionally, member of the two-component regulatory system MtrA/MtrB. This is DNA-binding response regulator MtrA (mtrA) from Mycobacterium leprae (strain TN).